The chain runs to 231 residues: Sugar fermentation stimulation protein homolog (231 aa).

This sequence belongs to the SfsA family.

The protein is Sugar fermentation stimulation protein homolog of Geotalea daltonii (strain DSM 22248 / JCM 15807 / FRC-32) (Geobacter daltonii).